We begin with the raw amino-acid sequence, 71 residues long: Mitotic-spindle organizing protein 1 (71 aa).

This sequence belongs to the MOZART1 family. Part of the gamma-tubulin complex.

The protein localises to the cytoplasm. It localises to the cytoskeleton. It is found in the microtubule organizing center. Its subcellular location is the spindle pole body. Required for gamma-tubulin complex recruitment to the microtubule organizing center (MTOC). The protein is Mitotic-spindle organizing protein 1 of Aspergillus clavatus (strain ATCC 1007 / CBS 513.65 / DSM 816 / NCTC 3887 / NRRL 1 / QM 1276 / 107).